A 148-amino-acid chain; its full sequence is Calmodulin-4 (148 aa).

EF-hand domains follow at residues 8–43, 44–79, 80–115, and 116–148; these read EEVA…LGKN, LPEK…YKKG, HRAG…LGES, and LSQE…HVEN. Ca(2+)-binding residues include Asp21, Asn23, Asp25, His27, Glu32, Asp57, Asp59, Asp61, Lys63, Glu68, Asp93, Asn95, Asp97, Tyr99, and Glu104.

Implicated in the early stage of ectopic ossification. In Mus musculus (Mouse), this protein is Calmodulin-4 (Calm4).